An 88-amino-acid chain; its full sequence is UPF0213 protein EF_2693 (88 aa).

Positions 5–82 (KSHYFYVLLC…KKLTRKQKEQ (78 aa)) constitute a GIY-YIG domain.

This sequence belongs to the UPF0213 family.

The chain is UPF0213 protein EF_2693 from Enterococcus faecalis (strain ATCC 700802 / V583).